The chain runs to 474 residues: Protein Rv3254 (474 aa).

The propeptide occupies 1-4; the sequence is MTGR.

This chain is Protein Rv3254, found in Mycobacterium tuberculosis (strain ATCC 25618 / H37Rv).